The sequence spans 1088 residues: RNA-directed RNA polymerase (1088 aa).

One can recognise a RdRp catalytic domain in the interval 501–687 (LSYGDVTRFL…AKRYIAGGKI (187 aa)).

Belongs to the reoviridae RNA-directed RNA polymerase family. As to quaternary structure, interacts with VP3 (Potential). Interacts with VP2; this interaction activates VP1. Interacts with NSP5; this interaction is probably necessary for the formation of functional virus factories. Interacts with NSP2; this interaction is weak. Mg(2+) is required as a cofactor.

It localises to the virion. It catalyses the reaction RNA(n) + a ribonucleoside 5'-triphosphate = RNA(n+1) + diphosphate. Its function is as follows. RNA-directed RNA polymerase that is involved in both transcription and genome replication. Together with VP3 capping enzyme, forms an enzyme complex positioned near the channels situated at each of the five-fold vertices of the core. Following infection, the outermost layer of the virus is lost, leaving a double-layered particle (DLP) made up of the core and VP6 shell. VP1 then catalyzes the transcription of fully conservative plus-strand genomic RNAs that are extruded through the DLP's channels into the cytoplasm where they function as mRNAs for translation of viral proteins. One copy of each of the viral (+)RNAs is also recruited during core assembly, together with newly synthesized polymerase complexes and VP2. The polymerase of these novo-formed particles catalyzes the synthesis of complementary minus-strands leading to dsRNA formation. To do so, the polymerase specifically recognizes and binds 4 bases 5'-UGUG-3' in the conserved 3'-sequence of plus-strand RNA templates. VP2 presumably activates the autoinhibited VP1-RNA complex to coordinate packaging and genome replication. Once dsRNA synthesis is complete, the polymerase switches to the transcriptional mode, thus providing secondary transcription. The chain is RNA-directed RNA polymerase from Homo sapiens (Human).